The primary structure comprises 210 residues: Probable glutathione S-transferase gst-36 (210 aa).

The GST N-terminal domain maps to 2–79 (PHFKFYYFDV…YLGHQFHRAG (78 aa)). Glutathione is bound by residues Y8, W39, K43, 49–51 (GQV), and 63–64 (QT). The GST C-terminal domain maps to 81-210 (NAVDCARLDM…YVSQRKATPA (130 aa)).

Belongs to the GST superfamily. Sigma family.

It carries out the reaction RX + glutathione = an S-substituted glutathione + a halide anion + H(+). Its function is as follows. Conjugation of reduced glutathione to a wide number of exogenous and endogenous hydrophobic electrophiles. The polypeptide is Probable glutathione S-transferase gst-36 (gst-36) (Caenorhabditis elegans).